The chain runs to 215 residues: FMN-dependent NADH:quinone oxidoreductase (215 aa).

17–19 is an FMN binding site; the sequence is SAS.

This sequence belongs to the azoreductase type 1 family. As to quaternary structure, homodimer. FMN serves as cofactor.

It catalyses the reaction 2 a quinone + NADH + H(+) = 2 a 1,4-benzosemiquinone + NAD(+). The enzyme catalyses N,N-dimethyl-1,4-phenylenediamine + anthranilate + 2 NAD(+) = 2-(4-dimethylaminophenyl)diazenylbenzoate + 2 NADH + 2 H(+). Quinone reductase that provides resistance to thiol-specific stress caused by electrophilic quinones. In terms of biological role, also exhibits azoreductase activity. Catalyzes the reductive cleavage of the azo bond in aromatic azo compounds to the corresponding amines. The protein is FMN-dependent NADH:quinone oxidoreductase of Clostridium botulinum (strain Alaska E43 / Type E3).